We begin with the raw amino-acid sequence, 267 residues long: MTRIALGIQYDGAAFCGWQSQPHGKTVQDELERALREFALTPLQTVVAGRTDTGVHGLGQVVHFDTELDRAEFSWVRGTNAFLPSTVAVQWAKPMPDAFHARFSAFERTYYYALYVHPVRSPMLASRAGWIHTPLDVDAMREAAACLIGEHDFSAFRSSECQSKTPVKHLYQIDIRPQGDFIHFRFRANAFLHHMVRNLMGCLVAVGRGRYPAAWLSEVLHGRDRNRAAPTFMPDGLYLAQVGYPETFAVPAPQAGSVPWSTVWTDS.

The active-site Nucleophile is the D52. Residue Y110 participates in substrate binding.

It belongs to the tRNA pseudouridine synthase TruA family. As to quaternary structure, homodimer.

The catalysed reaction is uridine(38/39/40) in tRNA = pseudouridine(38/39/40) in tRNA. Its function is as follows. Formation of pseudouridine at positions 38, 39 and 40 in the anticodon stem and loop of transfer RNAs. The chain is tRNA pseudouridine synthase A from Paraburkholderia phymatum (strain DSM 17167 / CIP 108236 / LMG 21445 / STM815) (Burkholderia phymatum).